A 217-amino-acid polypeptide reads, in one-letter code: Cytidylate kinase (217 aa).

G9–S17 is an ATP binding site.

It belongs to the cytidylate kinase family. Type 1 subfamily.

The protein resides in the cytoplasm. It catalyses the reaction CMP + ATP = CDP + ADP. The catalysed reaction is dCMP + ATP = dCDP + ADP. This Mycoplasma pneumoniae (strain ATCC 29342 / M129 / Subtype 1) (Mycoplasmoides pneumoniae) protein is Cytidylate kinase.